Reading from the N-terminus, the 238-residue chain is tRNA1(Val) (adenine(37)-N6)-methyltransferase (238 aa).

This sequence belongs to the methyltransferase superfamily. tRNA (adenine-N(6)-)-methyltransferase family.

The protein resides in the cytoplasm. The enzyme catalyses adenosine(37) in tRNA1(Val) + S-adenosyl-L-methionine = N(6)-methyladenosine(37) in tRNA1(Val) + S-adenosyl-L-homocysteine + H(+). Functionally, specifically methylates the adenine in position 37 of tRNA(1)(Val) (anticodon cmo5UAC). The chain is tRNA1(Val) (adenine(37)-N6)-methyltransferase from Shewanella sp. (strain W3-18-1).